A 567-amino-acid polypeptide reads, in one-letter code: MAKISRAAYADMFGPTVGDRVRLGDTELWIEVEKDYATYGHEVKFGGGKVIRDGMGQSQRPNTEAVDTVITNALILDHWGVVKADIGLKQGRIAAIGKAGNPDIQDNIDIIIGPGTEVIAGEGMIATAGGIDAHIHFICPQQIEEALMSGVTTMLGGGAGPATGTNATTCTPGPWHMGKMLQAADAFPMNLGFLGKGNASLPAALEEQMLAGAMGLKLHEDWGTTPASIDNCLNIAEKYDVQVAIHTDTLNESGFVEDTLAAFKGRTIHTYHTEGAGGGHAPDIIKACGELNVLPSSTNPTRPYTINTVDEHLDMLMVCHHLDPDIPEDVAFADSRIRKETIAAEDILHDLGAFSMISSDSQAMGRVGEVVCRTWQTAHKMKVQRGPLAQDSERADNFRAKRYIAKYTINPAIAHGIAHEVGSLEPGKLADIILWRPAFFGAKPSLIIKGGMIAAAPMGDANASIPTPQPVHYRPMFGAFGRAMQQTRLTFVCQAALDNGVKEQFGLQSPLSACRNTRTVTKKSMVLNDLTPQMEVDSQTYEVRANGELLVCEPAKVLPLAQRYFLF.

Positions 129–567 constitute a Urease domain; the sequence is GGIDAHIHFI…LPLAQRYFLF (439 aa). 3 residues coordinate Ni(2+): His-134, His-136, and Lys-217. Residue Lys-217 is modified to N6-carboxylysine. His-219 provides a ligand contact to substrate. Positions 246 and 272 each coordinate Ni(2+). The active-site Proton donor is the His-320. Asp-360 lines the Ni(2+) pocket.

Belongs to the metallo-dependent hydrolases superfamily. Urease alpha subunit family. Heterotrimer of UreA (gamma), UreB (beta) and UreC (alpha) subunits. Three heterotrimers associate to form the active enzyme. Requires Ni cation as cofactor. Post-translationally, carboxylation allows a single lysine to coordinate two nickel ions.

Its subcellular location is the cytoplasm. It catalyses the reaction urea + 2 H2O + H(+) = hydrogencarbonate + 2 NH4(+). It functions in the pathway nitrogen metabolism; urea degradation; CO(2) and NH(3) from urea (urease route): step 1/1. The sequence is that of Urease subunit alpha from Hahella chejuensis (strain KCTC 2396).